The following is a 145-amino-acid chain: Large ribosomal subunit protein uL13 (145 aa).

The protein belongs to the universal ribosomal protein uL13 family. Part of the 50S ribosomal subunit.

In terms of biological role, this protein is one of the early assembly proteins of the 50S ribosomal subunit, although it is not seen to bind rRNA by itself. It is important during the early stages of 50S assembly. This Bacillus cytotoxicus (strain DSM 22905 / CIP 110041 / 391-98 / NVH 391-98) protein is Large ribosomal subunit protein uL13.